The primary structure comprises 253 residues: Zinc finger protein GIS (253 aa).

Residues 1-10 (MDEATGETET) are compositionally biased toward acidic residues. Residues 1–85 (MDEATGETET…GDNSTDNNSI (85 aa)) are disordered. Composition is skewed to polar residues over residues 11 to 21 (QDFMNVESFSQ), 49 to 63 (SITT…PYQT), and 76 to 85 (GDNSTDNNSI). A C2H2-type zinc finger spans residues 91–113 (FECHYCFRNFPTSQALGGHQNAH).

Expressed in inflorescence meristems, floral meristems and stem epidermis.

Its subcellular location is the nucleus. Its function is as follows. Probable transcription factor required for the initiation of inflorescence trichomes in response to gibberellin (GA). Mediates the induction of GL1 expression by GA in inflorescence organs and is antagonized in its action by the DELLA repressor GAI. Acts upstream of the trichome initiation regulators GL1 and GL3, and downstream of the GA signaling repressor SPINDLY (SPY). Does not play a significant role in the cytokinin response. Controls trichome branching through GA signaling. Acts downstream of the key regulator STICHEL (STI) in an endoreduplication-independent pathway. Controls trichome cell division indirectly by acting downstream of a key endoreduplication regulator SIAMESE (SIM). The chain is Zinc finger protein GIS (GIS) from Arabidopsis thaliana (Mouse-ear cress).